Consider the following 602-residue polypeptide: NADH-quinone oxidoreductase subunit C/D (602 aa).

An NADH dehydrogenase I subunit C region spans residues 1–192 (MVNNMTDLTA…DPFELTKAKQ (192 aa)). Residues 216-602 (DFMFLNLGPN…IDFVMSDVDR (387 aa)) form an NADH dehydrogenase I subunit D region.

In the N-terminal section; belongs to the complex I 30 kDa subunit family. It in the C-terminal section; belongs to the complex I 49 kDa subunit family. As to quaternary structure, NDH-1 is composed of 13 different subunits. Subunits NuoB, CD, E, F, and G constitute the peripheral sector of the complex.

Its subcellular location is the cell inner membrane. It carries out the reaction a quinone + NADH + 5 H(+)(in) = a quinol + NAD(+) + 4 H(+)(out). NDH-1 shuttles electrons from NADH, via FMN and iron-sulfur (Fe-S) centers, to quinones in the respiratory chain. The immediate electron acceptor for the enzyme in this species is believed to be ubiquinone. Couples the redox reaction to proton translocation (for every two electrons transferred, four hydrogen ions are translocated across the cytoplasmic membrane), and thus conserves the redox energy in a proton gradient. In Klebsiella pneumoniae subsp. pneumoniae (strain ATCC 700721 / MGH 78578), this protein is NADH-quinone oxidoreductase subunit C/D.